The primary structure comprises 318 residues: S-adenosylmethionine/S-adenosylhomocysteine transporter (318 aa).

10 helical membrane-spanning segments follow: residues 7 to 27 (FANL…AFIW), 44 to 64 (LFVT…LLLF), 76 to 96 (VMPI…LEFI), 105 to 125 (KACF…YVQL), 134 to 154 (LGGL…GGGE), 163 to 183 (LGMP…GWTL), 193 to 213 (SLSI…LSLA), 231 to 251 (LFLQ…YNLF), 262 to 282 (FLSF…WLLL), and 285 to 305 (SFPP…RLIY). Residues 25 to 148 (FIWSSSFALS…LGLVSYLVYL (124 aa)) form the EamA 1 domain. Residues 191 to 304 (CESLSITAIN…GFMVLGCRLI (114 aa)) enclose the EamA 2 domain.

Belongs to the drug/metabolite transporter (DMT) superfamily. 10 TMS drug/metabolite exporter (DME) (TC 2.A.7.3) family.

Its subcellular location is the cell membrane. Functionally, transports S-adenosylmethionine (SAM) and S-adenosylhomocysteine (SAH). Allows bacteria to acquire SAM from the eukaryotic host cell and to likely remove the toxic by-product SAH. This is S-adenosylmethionine/S-adenosylhomocysteine transporter from Chlamydia muridarum (strain MoPn / Nigg).